A 167-amino-acid polypeptide reads, in one-letter code: MQRVTSYLPAGTPSSNPIDRVELPHDLRHLRRKLLHLENGEMVMLDLKEPVLFANGDLLVREDGELIEIVAAPEKLFEIKPRNRLHLIELAWHLGNRHLSAQIEEERILILRDHVIRAMLEGLGATVTEVSEPFQPARGAYHAHGGHSHGHDHGHSHGHDHHDHSHD.

Positions 137-167 are disordered; it reads ARGAYHAHGGHSHGHDHGHSHGHDHHDHSHD. Residues 149-167 show a composition bias toward basic and acidic residues; it reads HGHDHGHSHGHDHHDHSHD.

It belongs to the UreE family.

The protein localises to the cytoplasm. Involved in urease metallocenter assembly. Binds nickel. Probably functions as a nickel donor during metallocenter assembly. The sequence is that of Urease accessory protein UreE from Rhizobium rhizogenes (strain K84 / ATCC BAA-868) (Agrobacterium radiobacter).